The chain runs to 1072 residues: Carbamoyl phosphate synthase large chain (1072 aa).

The carboxyphosphate synthetic domain stretch occupies residues 1–401 (MPKYKDISKV…SLLKAVRSLE (401 aa)). Positions 129, 169, 175, 176, 208, 210, 215, 241, 242, 243, 284, and 298 each coordinate ATP. The 195-residue stretch at 133–327 (KRKMQEIGEP…IAKIAAKIAI (195 aa)) folds into the ATP-grasp 1 domain. Positions 284, 298, and 300 each coordinate Mg(2+). Mn(2+) is bound by residues glutamine 284, glutamate 298, and asparagine 300. The oligomerization domain stretch occupies residues 402 to 544 (IKAYGLRLDS…YIYSTYCEED (143 aa)). The carbamoyl phosphate synthetic domain stretch occupies residues 545–929 (EVETHDIPKV…ALYKALEGAG (385 aa)). Residues 671–861 (SKLLKELNIN…MVKLAVEVAL (191 aa)) enclose the ATP-grasp 2 domain. Positions 707, 746, 748, 752, 777, 778, 779, 780, 820, and 832 each coordinate ATP. Mg(2+) contacts are provided by glutamine 820, glutamate 832, and asparagine 834. Mn(2+) is bound by residues glutamine 820, glutamate 832, and asparagine 834. The MGS-like domain occupies 930–1072 (LKIPKKGKIL…QKDNVKNLVL (143 aa)). Residues 930–1072 (LKIPKKGKIL…QKDNVKNLVL (143 aa)) are allosteric domain.

The protein belongs to the CarB family. Composed of two chains; the small (or glutamine) chain promotes the hydrolysis of glutamine to ammonia, which is used by the large (or ammonia) chain to synthesize carbamoyl phosphate. Tetramer of heterodimers (alpha,beta)4. Mg(2+) is required as a cofactor. Requires Mn(2+) as cofactor.

The enzyme catalyses hydrogencarbonate + L-glutamine + 2 ATP + H2O = carbamoyl phosphate + L-glutamate + 2 ADP + phosphate + 2 H(+). It carries out the reaction hydrogencarbonate + NH4(+) + 2 ATP = carbamoyl phosphate + 2 ADP + phosphate + 2 H(+). It participates in amino-acid biosynthesis; L-arginine biosynthesis; carbamoyl phosphate from bicarbonate: step 1/1. Its pathway is pyrimidine metabolism; UMP biosynthesis via de novo pathway; (S)-dihydroorotate from bicarbonate: step 1/3. In terms of biological role, large subunit of the glutamine-dependent carbamoyl phosphate synthetase (CPSase). CPSase catalyzes the formation of carbamoyl phosphate from the ammonia moiety of glutamine, carbonate, and phosphate donated by ATP, constituting the first step of 2 biosynthetic pathways, one leading to arginine and/or urea and the other to pyrimidine nucleotides. The large subunit (synthetase) binds the substrates ammonia (free or transferred from glutamine from the small subunit), hydrogencarbonate and ATP and carries out an ATP-coupled ligase reaction, activating hydrogencarbonate by forming carboxy phosphate which reacts with ammonia to form carbamoyl phosphate. In Caldanaerobacter subterraneus subsp. tengcongensis (strain DSM 15242 / JCM 11007 / NBRC 100824 / MB4) (Thermoanaerobacter tengcongensis), this protein is Carbamoyl phosphate synthase large chain.